The sequence spans 83 residues: Large ribosomal subunit protein bL31B (83 aa).

This sequence belongs to the bacterial ribosomal protein bL31 family. Type B subfamily. In terms of assembly, part of the 50S ribosomal subunit.

This Tropheryma whipplei (strain TW08/27) (Whipple's bacillus) protein is Large ribosomal subunit protein bL31B.